The chain runs to 25 residues: Fibrinolytic enzyme large subunit (25 aa).

Residues 1–25 (VIGGTNASPGEIPWQLSQQRQSGSW) enclose the Peptidase S1 domain. The disordered stretch occupies residues 1–25 (VIGGTNASPGEIPWQLSQQRQSGSW). Positions 15–25 (QLSQQRQSGSW) are enriched in polar residues.

This sequence belongs to the peptidase S1 family. As to quaternary structure, heterodimer of a large and a small subunit held together by hydrophobic interactions.

In terms of biological role, cleaves the carboxyl side of basic amino acids, small neutral amino acids, and Met residue. It is also a plasminogen activator. The chain is Fibrinolytic enzyme large subunit from Eisenia fetida (Red wiggler worm).